Consider the following 1366-residue polypeptide: DNA-directed RNA polymerase subunit beta' (1366 aa).

Positions 1–20 (MTSSKPKKTSRVRKTTKNSK) are enriched in basic residues. The interval 1–34 (MTSSKPKKTSRVRKTTKNSKKNNPLTMPALAKTP) is disordered. Residues cysteine 248, cysteine 315, cysteine 322, and cysteine 325 each coordinate Zn(2+). Positions 1291-1366 (YTVDMPQSPS…LQEEGLLSDE (76 aa)) are disordered. Residues 1295-1305 (MPQSPSVSSTA) are compositionally biased toward polar residues. The segment covering 1354-1366 (LEGLQEEGLLSDE) has biased composition (low complexity).

The protein belongs to the RNA polymerase beta' chain family. RpoC2 subfamily. In cyanobacteria the RNAP catalytic core is composed of 2 alpha, 1 beta, 1 beta', 1 gamma and 1 omega subunit. When a sigma factor is associated with the core the holoenzyme is formed, which can initiate transcription. Requires Zn(2+) as cofactor.

It carries out the reaction RNA(n) + a ribonucleoside 5'-triphosphate = RNA(n+1) + diphosphate. In terms of biological role, DNA-dependent RNA polymerase catalyzes the transcription of DNA into RNA using the four ribonucleoside triphosphates as substrates. This is DNA-directed RNA polymerase subunit beta' from Prochlorococcus marinus (strain MIT 9301).